Reading from the N-terminus, the 619-residue chain is Kininogen-2 (619 aa).

The first 18 residues, 1–18, serve as a signal peptide directing secretion; the sequence is MKLITILFLCSRLLPSLT. Residue glutamine 19 is modified to Pyrrolidone carboxylic acid. Residues 27 to 131 enclose the Cystatin kininogen-type 1 domain; it reads CNDQDVFKAV…IQTCLITPAE (105 aa). 9 cysteine pairs are disulfide-bonded: cysteine 27–cysteine 589, cysteine 82–cysteine 93, cysteine 106–cysteine 125, cysteine 141–cysteine 144, cysteine 205–cysteine 217, cysteine 228–cysteine 247, cysteine 261–cysteine 264, cysteine 325–cysteine 337, and cysteine 348–cysteine 367. An N-linked (GlcNAc...) asparagine glycan is attached at asparagine 87. O-linked (GalNAc...) threonine; partial glycosylation is present at threonine 136. The 104-residue stretch at 150-253 folds into the Cystatin kininogen-type 2 domain; that stretch reads TKSPDLEPVL…SQKCDLYPGE (104 aa). 2 N-linked (GlcNAc...) asparagine glycosylation sites follow: asparagine 168 and asparagine 169. A glycan (N-linked (GlcNAc...) asparagine; partial) is linked at asparagine 197. Residue asparagine 204 is glycosylated (N-linked (GlcNAc...) asparagine). In terms of domain architecture, Cystatin kininogen-type 3 spans 270 to 373; it reads VDSPDLEEAL…TVNCQPLGQT (104 aa). An N-linked (GlcNAc...) asparagine glycan is attached at asparagine 280. 4-hydroxyproline is present on proline 380. The tract at residues 394–495 is disordered; that stretch reads EGSTTVSLPH…GKNNGKHYDW (102 aa). Serine 396 carries O-linked (GalNAc...) serine glycosylation. Threonine 397 and threonine 398 each carry an O-linked (GalNAc...) threonine glycan. O-linked (GalNAc...) serine glycosylation is found at serine 400 and serine 404. A compositionally biased stretch (basic residues) spans 442-490; sequence GHKHKHDQGHGHHRSHGLGHGHQKQHGLGHGHKHGHGHGKHKNKGKNNG. Serine 510 carries an O-linked (GalNAc...) serine glycan. Threonine 518, threonine 522, threonine 534, threonine 546, threonine 551, and threonine 568 each carry an O-linked (GalNAc...) threonine glycan.

Bradykinin is released from kininogen by plasma kallikrein. In terms of tissue distribution, plasma.

Its subcellular location is the secreted. It localises to the extracellular space. In terms of biological role, (1) Kininogens are inhibitors of thiol proteases; (2) HMW-kininogen plays an important role in blood coagulation by helping to position optimally prekallikrein and factor XI next to factor XII; (3) HMW-kininogen inhibits the thrombin- and plasmin-induced aggregation of thrombocytes; (4) the active peptide bradykinin that is released from HMW-kininogen shows a variety of physiological effects: (4A) influence in smooth muscle contraction, (4B) induction of hypotension, (4C) natriuresis and diuresis, (4D) decrease in blood glucose level, (4E) it is a mediator of inflammation and causes (4E1) increase in vascular permeability, (4E2) stimulation of nociceptors (4E3) release of other mediators of inflammation (e.g. prostaglandins), (4F) it has a cardioprotective effect (directly via bradykinin action, indirectly via endothelium-derived relaxing factor action); (5) LMW-kininogen inhibits the aggregation of thrombocytes; (6) LMW-kininogen is in contrast to HMW-kininogen not involved in blood clotting. This is Kininogen-2 (KNG2) from Bos taurus (Bovine).